Reading from the N-terminus, the 809-residue chain is Cell division control protein 48 homolog A (809 aa).

Ser-2 is modified (N-acetylserine). Position 41 is a phosphoserine (Ser-41). ADP contacts are provided by residues Gly-210, 248-256 (GPPGSGKTL), and His-387. Residue 521–529 (GPPGCGKTL) coordinates ATP. A disordered region spans residues 782–809 (AGSGATTGVADPFATSAAAAGDDDDLYN). Over residues 791–801 (ADPFATSAAAA) the composition is skewed to low complexity.

It belongs to the AAA ATPase family. In terms of assembly, homohexamer. Interacts with SERK1, GRF6, KAPP and SYP31, but not with KNOLLE. Component of the SERK1 signaling complex, composed of KAPP, CDC48A, GRF6 or GRF7, SERK1, SERK2, SERK3/BAK1 and BRI1. Interacts with PUX1, PUX2, PUX3, PUX4, PUX5, PUX7 and PUX11 via its N-terminus. In terms of processing, phosphorylated on at least one threonine residue and on Ser-41 by SERK1.

The protein localises to the nucleus. The protein resides in the cytoplasm. Its subcellular location is the cytoskeleton. It localises to the phragmoplast. It is found in the cell membrane. Probably functions in cell division and growth processes. Interacts with certain SNAREs as part of specialized membrane fusion events where vesicles from the same organelle fuse (homotypic fusion). The chain is Cell division control protein 48 homolog A (CDC48A) from Arabidopsis thaliana (Mouse-ear cress).